The primary structure comprises 602 residues: DNA ligase (602 aa).

Glutamate 262 contacts ATP. The active-site N6-AMP-lysine intermediate is lysine 264. ATP contacts are provided by arginine 269, arginine 284, glutamate 314, phenylalanine 354, arginine 431, and lysine 437.

Belongs to the ATP-dependent DNA ligase family. As to quaternary structure, monomer. Requires Mg(2+) as cofactor. It depends on Mn(2+) as a cofactor.

It carries out the reaction ATP + (deoxyribonucleotide)n-3'-hydroxyl + 5'-phospho-(deoxyribonucleotide)m = (deoxyribonucleotide)n+m + AMP + diphosphate.. The catalysed reaction is ADP + (deoxyribonucleotide)n-3'-hydroxyl + 5'-phospho-(deoxyribonucleotide)m = (deoxyribonucleotide)n+m + AMP + phosphate.. It catalyses the reaction GTP + (deoxyribonucleotide)n-3'-hydroxyl + 5'-phospho-(deoxyribonucleotide)m = (deoxyribonucleotide)n+m + GMP + diphosphate.. Inhibited in the presence of 100 mM KCl, NaCl or NH(4)Cl. DNA ligase that seals nicks in double-stranded DNA during DNA replication, DNA recombination and DNA repair. Can also use ADP, but not NAD(+). The sequence is that of DNA ligase from Aeropyrum pernix (strain ATCC 700893 / DSM 11879 / JCM 9820 / NBRC 100138 / K1).